The following is a 239-amino-acid chain: Increased recombination centers protein 22-1 (239 aa).

Residues 1–19 (MKLSTIFTAFAATIATVAG) form the signal peptide. At 20 to 161 (YETTGSKQTV…AAVSFFDPRL (142 aa)) the chain is on the lumenal side. The helical transmembrane segment at 162–182 (IFLELVLLITFAGLIYVGYEI) threads the bilayer. At 183 to 239 (WGKQYFKGVAPVKAKKVSAAKASSPVASGPSTTSATGYDTNWIPESHLKQKKTKKVN) the chain is on the cytoplasmic side. Low complexity predominate over residues 201 to 213 (AAKASSPVASGPS). Residues 201–222 (AAKASSPVASGPSTTSATGYDT) form a disordered region.

The protein belongs to the IRC22 family.

The protein localises to the endoplasmic reticulum membrane. Functionally, is probably involved in a pathway contributing to genomic integrity. The sequence is that of Increased recombination centers protein 22-1 (IRC22-1) from Candida albicans (strain SC5314 / ATCC MYA-2876) (Yeast).